The chain runs to 337 residues: Methylthioribose-1-phosphate isomerase (337 aa).

Residues Arg-47–Ala-49, Arg-81, and Gln-184 contribute to the substrate site. The active-site Proton donor is Asp-225. Asn-235–Lys-236 lines the substrate pocket.

This sequence belongs to the eIF-2B alpha/beta/delta subunits family. MtnA subfamily.

The enzyme catalyses 5-(methylsulfanyl)-alpha-D-ribose 1-phosphate = 5-(methylsulfanyl)-D-ribulose 1-phosphate. It participates in amino-acid biosynthesis; L-methionine biosynthesis via salvage pathway; L-methionine from S-methyl-5-thio-alpha-D-ribose 1-phosphate: step 1/6. Its function is as follows. Catalyzes the interconversion of methylthioribose-1-phosphate (MTR-1-P) into methylthioribulose-1-phosphate (MTRu-1-P). This chain is Methylthioribose-1-phosphate isomerase, found in Synechococcus sp. (strain CC9605).